A 245-amino-acid polypeptide reads, in one-letter code: tRNA pseudouridine synthase A (245 aa).

The Nucleophile role is filled by Asp-52. Tyr-111 is a substrate binding site.

It belongs to the tRNA pseudouridine synthase TruA family. As to quaternary structure, homodimer.

The enzyme catalyses uridine(38/39/40) in tRNA = pseudouridine(38/39/40) in tRNA. Formation of pseudouridine at positions 38, 39 and 40 in the anticodon stem and loop of transfer RNAs. The sequence is that of tRNA pseudouridine synthase A from Rickettsia bellii (strain RML369-C).